The following is a 454-amino-acid chain: Probable N-octanoylanthranilate hydrolase AqdA2 (454 aa).

Ser-185 functions as the Acyl-ester intermediate in the catalytic mechanism. Active-site charge relay system residues include Glu-306 and His-379.

It belongs to the type-B carboxylesterase/lipase family.

It carries out the reaction N-octanoylanthranilate + H2O = anthranilate + octanoate + H(+). Involved in the degradation of the Pseudomonas aeruginosa quorum sensing signal molecules HHQ (2-heptyl-4-quinolone) and PQS (2-heptyl-3-hydroxy-4-quinolone) to anthranilic acid. Probably catalyzes the hydrolysis of N-octanoylanthranilic acid to anthranilic acid. In Rhodococcus erythropolis (Arthrobacter picolinophilus), this protein is Probable N-octanoylanthranilate hydrolase AqdA2.